The primary structure comprises 329 residues: Acetyl-coenzyme A carboxylase carboxyl transferase subunit alpha (329 aa).

The CoA carboxyltransferase C-terminal domain maps to 40–294 (QLETLAARRR…KTSILRHLTE (255 aa)).

The protein belongs to the AccA family. In terms of assembly, acetyl-CoA carboxylase is a heterohexamer composed of biotin carboxyl carrier protein (AccB), biotin carboxylase (AccC) and two subunits each of ACCase subunit alpha (AccA) and ACCase subunit beta (AccD).

It localises to the cytoplasm. The enzyme catalyses N(6)-carboxybiotinyl-L-lysyl-[protein] + acetyl-CoA = N(6)-biotinyl-L-lysyl-[protein] + malonyl-CoA. The protein operates within lipid metabolism; malonyl-CoA biosynthesis; malonyl-CoA from acetyl-CoA: step 1/1. Its function is as follows. Component of the acetyl coenzyme A carboxylase (ACC) complex. First, biotin carboxylase catalyzes the carboxylation of biotin on its carrier protein (BCCP) and then the CO(2) group is transferred by the carboxyltransferase to acetyl-CoA to form malonyl-CoA. The sequence is that of Acetyl-coenzyme A carboxylase carboxyl transferase subunit alpha from Prochlorococcus marinus (strain SARG / CCMP1375 / SS120).